The chain runs to 273 residues: Protein ALUMINUM SENSITIVE 3 (273 aa).

7 helical membrane passes run 14–34 (WLIVFLKGMVKPAAALVVVLL), 51–71 (IYSVSRSFLQLSVIGFVLQFI), 76–96 (NSGWIILAYLFMVSVAGYTAG), 107–127 (YVAGLSILAGTSITMFLLVLL), 136–156 (YMIPIAGMLVGNAMTVTGVTM), 191–213 (ALVISLSPVLDSCKTVGLISLPG), and 228–248 (AIQLQIVVMNMMVGAATVSSI).

Belongs to the UPF0014 family. As to expression, expressed in roots, leaves, stems, and flowers.

The protein resides in the cell membrane. Required for aluminum (Al) resistance/tolerance, probably by translocating Al from sensitive tissues such as growing roots to tissues less sensisitive to the toxic effects of Al. This chain is Protein ALUMINUM SENSITIVE 3 (ALS3), found in Arabidopsis thaliana (Mouse-ear cress).